The following is a 252-amino-acid chain: 5-oxoprolinase subunit A 1 (252 aa).

Belongs to the LamB/PxpA family. In terms of assembly, forms a complex composed of PxpA, PxpB and PxpC.

It carries out the reaction 5-oxo-L-proline + ATP + 2 H2O = L-glutamate + ADP + phosphate + H(+). In terms of biological role, catalyzes the cleavage of 5-oxoproline to form L-glutamate coupled to the hydrolysis of ATP to ADP and inorganic phosphate. The protein is 5-oxoprolinase subunit A 1 of Pseudomonas aeruginosa (strain ATCC 15692 / DSM 22644 / CIP 104116 / JCM 14847 / LMG 12228 / 1C / PRS 101 / PAO1).